The primary structure comprises 134 residues: Small ribosomal subunit protein uS9 (134 aa).

The segment at 114 to 134 (EVERKKYGLKKARRAPQFSKR) is disordered. The segment covering 120–134 (YGLKKARRAPQFSKR) has biased composition (basic residues).

This sequence belongs to the universal ribosomal protein uS9 family.

The polypeptide is Small ribosomal subunit protein uS9 (Thermotoga neapolitana (strain ATCC 49049 / DSM 4359 / NBRC 107923 / NS-E)).